Here is a 433-residue protein sequence, read N- to C-terminus: Serine/threonine-protein kinase DCLK1 (433 aa).

The tract at residues 1–74 (MLELIEVNGT…GEEESDEGFQ (74 aa)) is disordered. Phosphoserine is present on residues serine 23, serine 25, serine 27, serine 30, serine 40, serine 45, serine 46, serine 48, serine 57, and serine 69. Residues 40 to 57 (SQHGGSSTSLSSTKVCSS) show a composition bias toward low complexity. The segment covering 59-71 (DENDGPGEEESDE) has biased composition (acidic residues). A Protein kinase domain is found at 83 to 340 (YKVGRTIGDG…AVQVLEHPWV (258 aa)). Residues 89–97 (IGDGNFAVV) and lysine 112 contribute to the ATP site. Aspartate 204 functions as the Proton acceptor in the catalytic mechanism. Residue tyrosine 213 is modified to Phosphotyrosine. A compositionally biased stretch (basic and acidic residues) spans 388-400 (QVFRRRRNQDVRG). Residues 388–433 (QVFRRRRNQDVRGRYKAQPAPPELNSESEDYSPSSSETVRSPNSPF) form a disordered region. A phosphoserine mark is found at serine 419, serine 428, and serine 431.

It belongs to the protein kinase superfamily. CAMK Ser/Thr protein kinase family. CaMK subfamily.

The enzyme catalyses L-seryl-[protein] + ATP = O-phospho-L-seryl-[protein] + ADP + H(+). It catalyses the reaction L-threonyl-[protein] + ATP = O-phospho-L-threonyl-[protein] + ADP + H(+). Its function is as follows. Probable kinase that may be involved in a calcium-signaling pathway controlling neuronal migration in the developing brain. May also participate in functions of the mature nervous system. This chain is Serine/threonine-protein kinase DCLK1 (Dclk1), found in Rattus norvegicus (Rat).